Consider the following 240-residue polypeptide: 2,3,4,5-tetrahydropyridine-2,6-dicarboxylate N-acetyltransferase (240 aa).

Belongs to the transferase hexapeptide repeat family. DapH subfamily.

The catalysed reaction is (S)-2,3,4,5-tetrahydrodipicolinate + acetyl-CoA + H2O = L-2-acetamido-6-oxoheptanedioate + CoA. Its pathway is amino-acid biosynthesis; L-lysine biosynthesis via DAP pathway; LL-2,6-diaminopimelate from (S)-tetrahydrodipicolinate (acetylase route): step 1/3. Its function is as follows. Catalyzes the transfer of an acetyl group from acetyl-CoA to tetrahydrodipicolinate. The polypeptide is 2,3,4,5-tetrahydropyridine-2,6-dicarboxylate N-acetyltransferase (Shouchella clausii (strain KSM-K16) (Alkalihalobacillus clausii)).